A 198-amino-acid polypeptide reads, in one-letter code: Protein GrpE (198 aa).

Positions 1–27 (MEERNEQVVEETKEAQTEEATIEKNSE) are enriched in basic and acidic residues. The disordered stretch occupies residues 1–39 (MEERNEQVVEETKEAQTEEATIEKNSEESVTEEATEETV). Residues 29–39 (SVTEEATEETV) are compositionally biased toward acidic residues.

Belongs to the GrpE family. Homodimer.

It localises to the cytoplasm. Functionally, participates actively in the response to hyperosmotic and heat shock by preventing the aggregation of stress-denatured proteins, in association with DnaK and GrpE. It is the nucleotide exchange factor for DnaK and may function as a thermosensor. Unfolded proteins bind initially to DnaJ; upon interaction with the DnaJ-bound protein, DnaK hydrolyzes its bound ATP, resulting in the formation of a stable complex. GrpE releases ADP from DnaK; ATP binding to DnaK triggers the release of the substrate protein, thus completing the reaction cycle. Several rounds of ATP-dependent interactions between DnaJ, DnaK and GrpE are required for fully efficient folding. The chain is Protein GrpE from Bacillus cytotoxicus (strain DSM 22905 / CIP 110041 / 391-98 / NVH 391-98).